A 294-amino-acid chain; its full sequence is tRNA pseudouridine synthase B (294 aa).

D39 (nucleophile) is an active-site residue.

The protein belongs to the pseudouridine synthase TruB family. Type 1 subfamily.

It carries out the reaction uridine(55) in tRNA = pseudouridine(55) in tRNA. Functionally, responsible for synthesis of pseudouridine from uracil-55 in the psi GC loop of transfer RNAs. This chain is tRNA pseudouridine synthase B, found in Streptococcus pyogenes serotype M3 (strain ATCC BAA-595 / MGAS315).